Reading from the N-terminus, the 288-residue chain is Zinc finger protein 42 (288 aa).

Composition is skewed to basic and acidic residues over residues 1-11 (MNEQKMNEQMK) and 26-38 (ALDR…DEAR). The tract at residues 1–48 (MNEQKMNEQMKKTAKTSGQKGPGGRALDRLTLKQDEARPVQNTRVEAP) is disordered. C2H2-type zinc fingers lie at residues 170–194 (LECP…MLVH), 199–221 (HVCA…FLVH), 227–251 (YQCT…IRIH), and 258–281 (VCPF…ILTH). Residues Lys-213 and Lys-215 each participate in a glycyl lysine isopeptide (Lys-Gly) (interchain with G-Cter in ubiquitin) cross-link.

It belongs to the krueppel C2H2-type zinc-finger protein family. Polyubiquitinated by RNF12, leading to proteasomal degradation. Restricted to testis, to germ cells in the early stages of spermatogenesis. Not expressed in spermatids, nor spermatozoa. Expressed in embryonic stem (ES) cells.

The protein resides in the nucleus. In terms of biological role, involved in the reprogramming of X-chromosome inactivation during the acquisition of pluripotency. Required for efficient elongation of TSIX, a non-coding RNA antisense to XIST. Binds DXPas34 enhancer within the TSIX promoter. Involved in ES cell self-renewal. This is Zinc finger protein 42 (Zfp42) from Mus musculus (Mouse).